Reading from the N-terminus, the 675-residue chain is Glycerophosphocholine phosphodiesterase GPCPD1 (675 aa).

The CBM20 domain maps to M1–I115. Substrate-binding positions include R70 and H88 to K89. Phosphoserine occurs at positions 178 and 427. The region spanning P321–Q621 is the GP-PDE domain. A Phosphotyrosine modification is found at Y611.

The protein belongs to the glycerophosphoryl diester phosphodiesterase family. Widely expressed with highest levels in skeletal muscle and heart.

The protein resides in the cytoplasm. It is found in the cytosol. The catalysed reaction is sn-glycerol 3-phosphocholine + H2O = sn-glycerol 3-phosphate + choline + H(+). Its function is as follows. May be involved in the negative regulation of skeletal muscle differentiation, independently of its glycerophosphocholine phosphodiesterase activity. The sequence is that of Glycerophosphocholine phosphodiesterase GPCPD1 (Gpcpd1) from Mus musculus (Mouse).